Consider the following 236-residue polypeptide: Small ribosomal subunit protein uS2c (236 aa).

Belongs to the universal ribosomal protein uS2 family.

It is found in the plastid. It localises to the chloroplast. The sequence is that of Small ribosomal subunit protein uS2c (rps2) from Nicotiana tabacum (Common tobacco).